The primary structure comprises 173 residues: ADP-ribosylation factor-like protein 11 (173 aa).

A lipid anchor (N-myristoyl glycine) is attached at Gly-2. GTP-binding positions include 17–24 (GLDCAGKT), 61–65 (DIGGQ), and 120–123 (NKQE).

Belongs to the small GTPase superfamily. Arf family.

In terms of biological role, may play a role in apoptosis. May act as a tumor suppressor. The sequence is that of ADP-ribosylation factor-like protein 11 (Arl11) from Rattus norvegicus (Rat).